We begin with the raw amino-acid sequence, 530 residues long: MTDHPRRVTRALLSVSDKTGLIEFAKALAAHDVELVSTGGTAKAIAAAGLKVKDVSELTGFPEMMDGRVKTLHPKVHGGLLAIRDNKDHADAMKAHGIAPIDLLVVNLYPFEATVDKGAGFEDCIENIDIGGPAMIRAAAKNHDDVAVVVEAEDYKAVLDELAANKGATTLKLRRRLAAKAYARTAAYDAAISNWFNRQLEIDAPDFRAFGGKLIQSLRYGENPHQTAAFYATPDKRPGVSTARQLQGKELSYNNINDTDAAYECIGEFDAKRTAACVIVKHANPCGVAEGSDLVSAYRKALACDSTSAFGGIIAMNRALDADTAREITKIFTEVIIAPDASEEAIAIIGARKNLRLLLAGSLPDPRAPGLTAKTVAGGLLVQSRDNAVVDDMTFKVVTKRAPTDAEMRDLKFAFRVAKHVKSNTIIYAKDLATVGIGAGQMSRVDSARIAARKAQDAAVELKLAEPLTKGSVVASDAFFPFADGMLACIEAGATAVVQPGGSMRDDEVIKAADEHGIAMVFTGTRHFRH.

In terms of domain architecture, MGS-like spans 2–150 (TDHPRRVTRA…KNHDDVAVVV (149 aa)).

Belongs to the PurH family.

It catalyses the reaction (6R)-10-formyltetrahydrofolate + 5-amino-1-(5-phospho-beta-D-ribosyl)imidazole-4-carboxamide = 5-formamido-1-(5-phospho-D-ribosyl)imidazole-4-carboxamide + (6S)-5,6,7,8-tetrahydrofolate. The enzyme catalyses IMP + H2O = 5-formamido-1-(5-phospho-D-ribosyl)imidazole-4-carboxamide. Its pathway is purine metabolism; IMP biosynthesis via de novo pathway; 5-formamido-1-(5-phospho-D-ribosyl)imidazole-4-carboxamide from 5-amino-1-(5-phospho-D-ribosyl)imidazole-4-carboxamide (10-formyl THF route): step 1/1. It participates in purine metabolism; IMP biosynthesis via de novo pathway; IMP from 5-formamido-1-(5-phospho-D-ribosyl)imidazole-4-carboxamide: step 1/1. In Bradyrhizobium diazoefficiens (strain JCM 10833 / BCRC 13528 / IAM 13628 / NBRC 14792 / USDA 110), this protein is Bifunctional purine biosynthesis protein PurH.